Reading from the N-terminus, the 295-residue chain is Nucleotide-binding protein YvcJ (295 aa).

16-23 serves as a coordination point for ATP; it reads GMSGAGKT. 67–70 lines the GTP pocket; it reads DLRG.

The protein belongs to the RapZ-like family.

Its function is as follows. Displays ATPase and GTPase activities. Can also hydrolyze pNPP. May affect the expression of competence via the phosphorylation of a cellular component. The sequence is that of Nucleotide-binding protein YvcJ (yvcJ) from Bacillus subtilis (strain 168).